The chain runs to 894 residues: MQSDTLTVQTVPNTTNVTNTEHSMLAKIEENRHIIQTIWEKQNLGKLTECEQFQKRLHSNLLLLAPLADHQQNYHKQQQALLQQQQQQQQALLQQQQQSPVTNVATNTPPTLQHSISSPSPNNFNNNNNANNQFLSPNSPQVAKSSPSQNNPSTPIANTPTTTTTTAATTATNTNTMMSGSSGGVVSPVSNQQQQQSIQSPSQQSVVQRSPSQSLNSSASSIQSLQNIQNTQNTIQQLTNSLTQVKTIIQQYQSQNQQVPQDVISRYHEFYSMLQQQQQNLLQQQSLLQQQQALLQQQQVGNPMQQSNDMQPQTPQQNNMQQQQQPQTPQQTNMQQPQTPQQNSMQPSQQPITQQEYQQIYDKIVSMSSQILLCNQNIQKLQSESYDPHVLQGLQNQVANLEIAQANSLRFLPQQYHVVLFQQQQQQQANQQQLQLMQIKQSKEYMVLTPAQQLIYNQQIQQNHYNQQVILRQQQQKLMAILEQQNQMIAQQQQQQHQMHQQHQMQPQQQQQQHQMHQQSPQQPQQMGMGGNPPSLEMISPMSAVMNGVTSPMNQGMMSSNNGMPTITTSLSAISPTSPIGTNLNMSNPTTTTVANVTTTAATTTTASSSGKEEKEKKKDKKDKDKDKDKDDDDKESKKDKKDKKDKKASKEKTSHWTSEEHNKFLEAVQQFGIKDYHAIAKFVQTRNHHQVRTHVNTYLKNQKKAEAATSSTQVSTPQQQLPIVGTPQQSVGTPQQQQPPIEQTPPPPQQQQQPPQLTPEQQLASQQQQATLQFQQYQQPQDQQQQQYQQYQQYDPQQQQQQPQQQPPPPQTTPPNNENNNNINNNLENTNNNDNGNNNNNEYNSGFDSNSGLNDEMGIGLFGSPGNNSNNNLGISIEGNNFDDNPSISSPGV.

Over residues 93–139 the composition is skewed to low complexity; sequence LQQQQQSPVTNVATNTPPTLQHSISSPSPNNFNNNNNANNQFLSPNS. Disordered stretches follow at residues 93–221, 299–353, 492–539, and 601–659; these read LQQQ…SASS, QVGN…QPIT, QQQQ…LEMI, and AATT…HWTS. Residues 140–149 show a composition bias toward polar residues; it reads PQVAKSSPSQ. Low complexity predominate over residues 150-221; the sequence is NNPSTPIANT…SQSLNSSASS (72 aa). The segment covering 300-309 has biased composition (polar residues); the sequence is VGNPMQQSND. Composition is skewed to low complexity over residues 310 to 353 and 492 to 527; these read MQPQ…QPIT and QQQQQHQMHQQHQMQPQQQQQQHQMHQQSPQQPQQM. Composition is skewed to basic and acidic residues over residues 611 to 640 and 649 to 659; these read GKEEKEKKKDKKDKDKDKDKDDDDKESKKD and ASKEKTSHWTS. Residues 649–704 form the HTH myb-type domain; that stretch reads ASKEKTSHWTSEEHNKFLEAVQQFGIKDYHAIAKFVQTRNHHQVRTHVNTYLKNQK. A DNA-binding region (H-T-H motif) is located at residues 677-700; sequence YHAIAKFVQTRNHHQVRTHVNTYL. The tract at residues 703–852 is disordered; it reads QKKAEAATSS…EYNSGFDSNS (150 aa). 3 stretches are compositionally biased toward low complexity: residues 710-742, 751-805, and 815-845; these read TSSTQVSTPQQQLPIVGTPQQSVGTPQQQQPPI, QQQQ…QQPQ, and PPNNENNNNINNNLENTNNNDNGNNNNNEYN.

It localises to the nucleus. In Dictyostelium discoideum (Social amoeba), this protein is Myb-like protein K (mybK).